A 125-amino-acid chain; its full sequence is Small ribosomal subunit protein uS12c (125 aa).

Belongs to the universal ribosomal protein uS12 family. In terms of assembly, part of the 30S ribosomal subunit.

The protein localises to the plastid. With S4 and S5 plays an important role in translational accuracy. Located at the interface of the 30S and 50S subunits. This chain is Small ribosomal subunit protein uS12c (rps12), found in Euglena longa (Euglenophycean alga).